Reading from the N-terminus, the 337-residue chain is Phosphate acyltransferase (337 aa).

The protein belongs to the PlsX family. As to quaternary structure, homodimer. Probably interacts with PlsY.

The protein localises to the cytoplasm. It carries out the reaction a fatty acyl-[ACP] + phosphate = an acyl phosphate + holo-[ACP]. The protein operates within lipid metabolism; phospholipid metabolism. Functionally, catalyzes the reversible formation of acyl-phosphate (acyl-PO(4)) from acyl-[acyl-carrier-protein] (acyl-ACP). This enzyme utilizes acyl-ACP as fatty acyl donor, but not acyl-CoA. The polypeptide is Phosphate acyltransferase (Listeria welshimeri serovar 6b (strain ATCC 35897 / DSM 20650 / CCUG 15529 / CIP 8149 / NCTC 11857 / SLCC 5334 / V8)).